The primary structure comprises 35 residues: ECKYLWGTCEKDEHCCEHLGCNKKHGWCGWDGTFG.

Intrachain disulfides connect Cys-2/Cys-16, Cys-9/Cys-21, and Cys-15/Cys-28.

It belongs to the neurotoxin 10 (Hwtx-1) family. 24 (Hwtx-6) subfamily. In terms of tissue distribution, expressed by the venom gland.

It localises to the secreted. Its function is as follows. Gating-modifier toxin that dose-dependently inhibits inactivation of voltage-gated sodium channels and reduces the peak of sodium current in cockroach DUM neurons. In vivo, reversibly paralyzes cockroaches for several hours, paralyzes rat after intracerebroventricular injection and blocks the neuromuscular transmission of the isolated rat phrenic nerve-diaphragm preparation. The protein is U1-theraphotoxin-Hhn1a of Cyriopagopus hainanus (Chinese bird spider).